We begin with the raw amino-acid sequence, 274 residues long: Energy-coupling factor transporter ATP-binding protein EcfA1 (274 aa).

The ABC transporter domain maps to isoleucine 11–aspartate 245. Glycine 45 to serine 52 lines the ATP pocket.

This sequence belongs to the ABC transporter superfamily. Energy-coupling factor EcfA family. In terms of assembly, forms a stable energy-coupling factor (ECF) transporter complex composed of 2 membrane-embedded substrate-binding proteins (S component), 2 ATP-binding proteins (A component) and 2 transmembrane proteins (T component).

Its subcellular location is the cell membrane. In terms of biological role, ATP-binding (A) component of a common energy-coupling factor (ECF) ABC-transporter complex. Unlike classic ABC transporters this ECF transporter provides the energy necessary to transport a number of different substrates. The sequence is that of Energy-coupling factor transporter ATP-binding protein EcfA1 from Mycoplasma mobile (strain ATCC 43663 / 163K / NCTC 11711) (Mesomycoplasma mobile).